We begin with the raw amino-acid sequence, 397 residues long: Serpin B10 (397 aa).

Residues 74-77 (KKRK) carry the Nuclear localization signal motif.

Belongs to the serpin family. Ov-serpin subfamily.

Its subcellular location is the nucleus. It is found in the cytoplasm. In terms of biological role, protease inhibitor that may play a role in the regulation of protease activities during hematopoiesis and apoptosis induced by TNF. May regulate protease activities in the cytoplasm and in the nucleus. In Rhinolophus ferrumequinum (Greater horseshoe bat), this protein is Serpin B10 (SERPINB10).